The chain runs to 146 residues: Stress enhanced protein 1, chloroplastic (146 aa).

The N-terminal 73 residues, 1 to 73, are a transit peptide targeting the chloroplast; the sequence is MALSQVSASL…GNRAASVSIR (73 aa). Helical transmembrane passes span 84–104 and 120–140; these read LDIWLGRGAMVGFAVAITVEI and LPTVALAVTALVGVLAAVFIF.

It belongs to the ELIP/psbS family.

The protein localises to the plastid. It localises to the chloroplast thylakoid membrane. May be involved in non-photochemical quenching, a process that maintains the balance between dissipation and utilization of light energy to minimize generation of oxidizing molecules, thereby protecting the plant against photo-oxidative damage. May play a photoprotective role in the thylakoid membrane in response to light stress. The chain is Stress enhanced protein 1, chloroplastic from Arabidopsis thaliana (Mouse-ear cress).